A 122-amino-acid polypeptide reads, in one-letter code: Large ribosomal subunit protein bL19 (122 aa).

It belongs to the bacterial ribosomal protein bL19 family.

This protein is located at the 30S-50S ribosomal subunit interface and may play a role in the structure and function of the aminoacyl-tRNA binding site. The polypeptide is Large ribosomal subunit protein bL19 (Acinetobacter baumannii (strain AB307-0294)).